The sequence spans 306 residues: UDP-N-acetylenolpyruvoylglucosamine reductase (306 aa).

Residues 34 to 198 (VGGPADLLIT…LEVTFKLHNS (165 aa)) enclose the FAD-binding PCMH-type domain. The active site involves Arg-177. Catalysis depends on Ser-227, which acts as the Proton donor. Glu-297 is an active-site residue.

Belongs to the MurB family. It depends on FAD as a cofactor.

Its subcellular location is the cytoplasm. The enzyme catalyses UDP-N-acetyl-alpha-D-muramate + NADP(+) = UDP-N-acetyl-3-O-(1-carboxyvinyl)-alpha-D-glucosamine + NADPH + H(+). The protein operates within cell wall biogenesis; peptidoglycan biosynthesis. Its function is as follows. Cell wall formation. The sequence is that of UDP-N-acetylenolpyruvoylglucosamine reductase from Clostridium botulinum (strain 657 / Type Ba4).